The following is a 112-amino-acid chain: Large ribosomal subunit protein P2A (112 aa).

Positions 83 to 112 are disordered; it reads GAAPAAEAKKEEKVEEKEESDDDMGFSLFD. Positions 89 to 98 are enriched in basic and acidic residues; that stretch reads EAKKEEKVEE.

It belongs to the eukaryotic ribosomal protein P1/P2 family. As to quaternary structure, P1 and P2 exist as dimers at the large ribosomal subunit. Phosphorylated.

Plays an important role in the elongation step of protein synthesis. This Zea mays (Maize) protein is Large ribosomal subunit protein P2A (RPP2A).